Here is a 401-residue protein sequence, read N- to C-terminus: Tryptophan synthase beta chain (401 aa).

An N6-(pyridoxal phosphate)lysine modification is found at lysine 91.

It belongs to the TrpB family. In terms of assembly, tetramer of two alpha and two beta chains. It depends on pyridoxal 5'-phosphate as a cofactor.

It carries out the reaction (1S,2R)-1-C-(indol-3-yl)glycerol 3-phosphate + L-serine = D-glyceraldehyde 3-phosphate + L-tryptophan + H2O. Its pathway is amino-acid biosynthesis; L-tryptophan biosynthesis; L-tryptophan from chorismate: step 5/5. Functionally, the beta subunit is responsible for the synthesis of L-tryptophan from indole and L-serine. The sequence is that of Tryptophan synthase beta chain from Lactococcus lactis subsp. cremoris (strain MG1363).